The primary structure comprises 243 residues: Voltage-gated monoatomic cation channel TMEM109 (243 aa).

The signal sequence occupies residues 1–33 (MAGSGSSAPWGKHLLHAVLMVLVALVLLHSALA). The Lumenal portion of the chain corresponds to 34 to 83 (QSHRDFAPPGQQRREAPVDLLTQIGRSVRETLDTWIGPETMHLISETLSQ). The chain crosses the membrane as a helical span at residues 84 to 104 (VMWAISSAISVAFFALSGIAA). At 105–135 (QLLTALGLDGDHLTQGLKLSPSQVQTFLLWG) the chain is on the cytoplasmic side. Residues 136–156 (AGALVVYWLLSLLLGLVLAVL) form a helical membrane-spanning segment. Residues 157 to 185 (GRILGGLKLVIFLAGFVALVRSVPDPSTR) lie on the Lumenal side of the membrane. Residues 186–205 (ALLLLALLTLYALLSRLTGS) traverse the membrane as a helical segment. Residues 206–243 (RASGAQLEAKVRGLERQVDELRWRQRRAAKGARSVEEE) lie on the Cytoplasmic side of the membrane.

Homooligomer. Interacts with CRYAB; in the cellular response to DNA damage. Post-translationally, the N-terminus is blocked. As to expression, widely expressed. Expressed in skeletal, cardiac and smooth muscle cells, in brain, including neuroglial cells, cerebral cortex neurons and cerebellum, but not Purkinje cells. Also detected in Paneth and Goblet cells of the small intestine (but not in the epithelium), duodenal gland, pancreas, parotid gland, testis, thyroid gland and adrenal gland, as well as in epidermis, choroid plexus, ductus epididymidis, lymphocytes, fibroblasts, endothelial cells and seminiferous epithelial cells (at protein level). Not detected in mucous cells of the duodenal gland, in hepatocytes nor in uriniferous tubules.

The protein resides in the nucleus outer membrane. Its subcellular location is the endoplasmic reticulum membrane. The protein localises to the sarcoplasmic reticulum membrane. The enzyme catalyses K(+)(in) = K(+)(out). It catalyses the reaction Ca(2+)(in) = Ca(2+)(out). Functionally, functions as a voltage-gated monoatomic cation channel permeable to both potassium and calcium. Plays a role in the cellular response to DNA damage. The protein is Voltage-gated monoatomic cation channel TMEM109 of Oryctolagus cuniculus (Rabbit).